We begin with the raw amino-acid sequence, 231 residues long: Regulatory protein VanR (231 aa).

Residues 4 to 117 (KILIVDDEHE…ELIARVKAQL (114 aa)) enclose the Response regulatory domain. Asp53 is subject to 4-aspartylphosphate. The segment at residues 131-231 (ENVIVHSGLV…VWGVGYKIEK (101 aa)) is a DNA-binding region (ompR/PhoB-type).

As to quaternary structure, monomer. Phosphorylated by VanS. Dephosphorylated by VanS. Can be phosphorylated nonenzymatically by acetyl-phosphate.

It is found in the cytoplasm. Functionally, member of the two-component regulatory system VanS/VanR. Binds to the promoter regions of target genes, including vanH and vanR; phosphorylation of VanR increases binding affinity to the vanH and vanR promoters significantly. DNA binding may be inhibited by the cognate sensor protein, VanS. Activates the transcription of vanH, vanA and vanX in response to vancomycin which results in vancomycin resistance. Involved in conferring vancomycin resistance. The chain is Regulatory protein VanR (vanR) from Enterococcus faecium (Streptococcus faecium).